Reading from the N-terminus, the 356-residue chain is MTQQRTLLVMAGGTGGHVFPGLAVAHALREQGWKVVWLGNRTGMEATLVPKHDIPMEFIQFGGLRGKGLVTKFLLPLNLLRAFWQSLGALRRVRPSVVLGMGGYITFPAGMMASLLGRPLVLHEQNSIAGLANKVLAKVADRVLCAFPDTLPDSEWTGNPVREELAHMAEPEARYDIRTGPLNVLVVGGSLGAAALNDVVPKAIAMLPEAQRPVVTHQAGAKQIDKLRANYAAAQVSAQTLPFIDDMAKAYADADLVICRAGAMTVSEVAAAGVAALFVPFPHAVDDHQTTNAEFLSKQGAALLVQQQELTADGLAKTIAGLNRPQLKEMARLARGLAKPEATRRVAEVCSQMARD.

UDP-N-acetyl-alpha-D-glucosamine is bound by residues 14–16, N126, R162, S190, I244, and Q289; that span reads TGG.

The protein belongs to the glycosyltransferase 28 family. MurG subfamily.

It is found in the cell inner membrane. The catalysed reaction is di-trans,octa-cis-undecaprenyl diphospho-N-acetyl-alpha-D-muramoyl-L-alanyl-D-glutamyl-meso-2,6-diaminopimeloyl-D-alanyl-D-alanine + UDP-N-acetyl-alpha-D-glucosamine = di-trans,octa-cis-undecaprenyl diphospho-[N-acetyl-alpha-D-glucosaminyl-(1-&gt;4)]-N-acetyl-alpha-D-muramoyl-L-alanyl-D-glutamyl-meso-2,6-diaminopimeloyl-D-alanyl-D-alanine + UDP + H(+). It functions in the pathway cell wall biogenesis; peptidoglycan biosynthesis. Cell wall formation. Catalyzes the transfer of a GlcNAc subunit on undecaprenyl-pyrophosphoryl-MurNAc-pentapeptide (lipid intermediate I) to form undecaprenyl-pyrophosphoryl-MurNAc-(pentapeptide)GlcNAc (lipid intermediate II). This chain is UDP-N-acetylglucosamine--N-acetylmuramyl-(pentapeptide) pyrophosphoryl-undecaprenol N-acetylglucosamine transferase, found in Cupriavidus pinatubonensis (strain JMP 134 / LMG 1197) (Cupriavidus necator (strain JMP 134)).